The primary structure comprises 373 residues: MPVVKMLKQVASRTLGSPACGCQPPTLPRRFLGTSPRQIPADANFHSTSFSEANQPRVLITGGLGQLGVGLASLLRKRFGKDNVILSDIRKPPEHVFLSGPFIYSDILDYKNLREIVVNNRVTWLFHYSALLSAVGEANVSLARAVNITGLHNVLDVAAEHGLRLFVPSTIGAFGPTSPRNPTPDLCIQRPRTIYGVSKVHAELMGEYYYYRYGLDFRCLRYPGIISADSQPGGGTTDYAVQIFQDAVKNGRFECNLNPGTKLPMMYIDDCLRATLEVMEAPAEALSLRTYNVNAMSFTPAELAQEVLKHIPEFQITYNVDSVRQAIADSWPMNFDDSTARRDWGWKHDFDLPELVTTMLNFHGAHSRVAQAN.

NAD(+) is bound by residues 62-67 (GGLGQL), 88-90 (DIR), 106-107 (DI), Tyr195, Lys199, and Ile225. Catalysis depends on Tyr195, which acts as the Proton donor/acceptor.

Belongs to the NAD(P)-dependent epimerase/dehydratase family. In terms of assembly, homodimer.

It localises to the mitochondrion. It carries out the reaction L-threonine + NAD(+) = (2S)-2-amino-3-oxobutanoate + NADH + H(+). Its pathway is amino-acid degradation; L-threonine degradation via oxydo-reductase pathway; glycine from L-threonine: step 1/2. In terms of biological role, catalyzes the NAD(+)-dependent oxidation of L-threonine to 2-amino-3-ketobutyrate, mediating L-threonine catabolism. This is L-threonine 3-dehydrogenase, mitochondrial from Sus scrofa (Pig).